Consider the following 85-residue polypeptide: Putative sodium channel toxin Ts37 (85 aa).

The N-terminal stretch at 1–20 (MAGEWACLLVSLVLLWGAAG) is a signal peptide. Positions 22–83 (RDGFLLDRNF…KIWGDSVRCR (62 aa)) constitute an LCN-type CS-alpha/beta domain. 4 cysteine pairs are disulfide-bonded: cysteine 32-cysteine 82, cysteine 36-cysteine 59, cysteine 45-cysteine 64, and cysteine 49-cysteine 66.

The protein belongs to the long (4 C-C) scorpion toxin superfamily. Sodium channel inhibitor family. As to expression, expressed by the venom gland.

It is found in the secreted. Its function is as follows. Putative sodium channel toxin. The polypeptide is Putative sodium channel toxin Ts37 (Tityus serrulatus (Brazilian scorpion)).